The primary structure comprises 66 residues: Large ribosomal subunit protein uL29 (66 aa).

This sequence belongs to the universal ribosomal protein uL29 family.

The protein is Large ribosomal subunit protein uL29 of Thermosipho africanus (strain TCF52B).